Here is a 298-residue protein sequence, read N- to C-terminus: MAIVGSGNISTDLLYKLLRSDWLEPRWMVGIDPQSEGLARARKLGLETTHEGVDWLLAQPEKPDLVFEATSAYVHRDAAPKYEAAGIRAIDLTPAAVGPAVIPPANLRQHLDAPNVNMITCGGQATIPIVYAVSRVVEVPYAEIVASVASVSAGPGTRANIDEFTKTTSRGVETIGGAKRGKAIIILNPADPPMIMRDTIFCAIPEDADRDAIAQSIHDVVKEVQSYVPGYRLLNEPQFDDPSLNSGGQALVTTFVEVEGAGDYLPPYAGNLDIMTAAATKVGEEIAKETLSVAGGTR.

6 to 9 contacts NAD(+); the sequence is SGNI. C121 (acyl-thioester intermediate) is an active-site residue. NAD(+)-binding positions include 152–160 and N271; that span reads SAGPGTRAN.

It belongs to the acetaldehyde dehydrogenase family.

The catalysed reaction is acetaldehyde + NAD(+) + CoA = acetyl-CoA + NADH + H(+). The chain is Acetaldehyde dehydrogenase from Mycobacterium avium (strain 104).